A 216-amino-acid polypeptide reads, in one-letter code: GTP cyclohydrolase-2 (216 aa).

Position 50–54 (50–54 (RIHSE)) interacts with GTP. The Zn(2+) site is built by Cys-55, Cys-66, and Cys-68. GTP-binding positions include Gln-71, 93-95 (EGR), and Thr-115. Residue Asp-127 is the Proton acceptor of the active site. Arg-129 serves as the catalytic Nucleophile. Residues Thr-150 and Lys-155 each contribute to the GTP site.

This sequence belongs to the GTP cyclohydrolase II family. Requires Zn(2+) as cofactor.

The enzyme catalyses GTP + 4 H2O = 2,5-diamino-6-hydroxy-4-(5-phosphoribosylamino)-pyrimidine + formate + 2 phosphate + 3 H(+). The protein operates within cofactor biosynthesis; riboflavin biosynthesis; 5-amino-6-(D-ribitylamino)uracil from GTP: step 1/4. In terms of biological role, catalyzes the conversion of GTP to 2,5-diamino-6-ribosylamino-4(3H)-pyrimidinone 5'-phosphate (DARP), formate and pyrophosphate. The sequence is that of GTP cyclohydrolase-2 from Histophilus somni (strain 129Pt) (Haemophilus somnus).